Reading from the N-terminus, the 84-residue chain is Small ribosomal subunit protein uS17 (84 aa).

Belongs to the universal ribosomal protein uS17 family. Part of the 30S ribosomal subunit.

Its function is as follows. One of the primary rRNA binding proteins, it binds specifically to the 5'-end of 16S ribosomal RNA. This chain is Small ribosomal subunit protein uS17, found in Clostridium perfringens (strain ATCC 13124 / DSM 756 / JCM 1290 / NCIMB 6125 / NCTC 8237 / Type A).